A 902-amino-acid polypeptide reads, in one-letter code: Probable dipeptidyl-aminopeptidase B (902 aa).

Disordered regions lie at residues M1–D23 and D53–S72. Residues M1–Q78 lie on the Cytoplasmic side of the membrane. Residues T7–S21 show a composition bias toward low complexity. The helical; Signal-anchor for type II membrane protein transmembrane segment at I79–L99 threads the bilayer. At T100 to H902 the chain is on the vacuolar side. Residues N335 and N626 are each glycosylated (N-linked (GlcNAc...) asparagine). S740 (charge relay system) is an active-site residue. N794 and N799 each carry an N-linked (GlcNAc...) asparagine glycan. Active-site charge relay system residues include D817 and H850.

The protein belongs to the peptidase S9B family.

Its subcellular location is the vacuole membrane. It carries out the reaction Release of an N-terminal dipeptide, Xaa-Yaa-|-Zaa-, from a polypeptide, preferentially when Yaa is Pro, provided Zaa is neither Pro nor hydroxyproline.. Functionally, type IV dipeptidyl-peptidase which removes N-terminal dipeptides sequentially from polypeptides having unsubstituted N-termini provided that the penultimate residue is proline. In Aspergillus oryzae (strain ATCC 42149 / RIB 40) (Yellow koji mold), this protein is Probable dipeptidyl-aminopeptidase B (dapB).